Reading from the N-terminus, the 609-residue chain is Putative 4-coumarate--CoA ligase-like 8 (609 aa).

Residues Ser-194, Ser-195, Gly-196, Thr-197, Thr-198, and Lys-202 each coordinate ATP. The (E)-4-coumaroyl-AMP site is built by Phe-252 and Ser-256. Arg-274 provides a ligand contact to CoA. Residues Ser-276 to Gln-348 are SBD1. The (E)-4-coumaroyl-AMP site is built by Gly-326, Gln-348, Thr-353, and Met-361. Gln-348 and Thr-353 together coordinate ATP. The tract at residues Cys-349–Tyr-450 is SBD2. Positions 482 and 497 each coordinate ATP. 2 residues coordinate (E)-4-coumaroyl-AMP: Lys-499 and Lys-503. Ala-506 contributes to the CoA binding site. Residue Lys-589 coordinates ATP.

Belongs to the ATP-dependent AMP-binding enzyme family. Requires Mg(2+) as cofactor.

It carries out the reaction (E)-4-coumarate + ATP + CoA = (E)-4-coumaroyl-CoA + AMP + diphosphate. The enzyme catalyses (E)-4-coumarate + ATP + H(+) = (E)-4-coumaroyl-AMP + diphosphate. It catalyses the reaction (E)-4-coumaroyl-AMP + CoA = (E)-4-coumaroyl-CoA + AMP + H(+). In terms of biological role, carboxylate--CoA ligase that may use 4-coumarate as substrate. Follows a two-step reaction mechanism, wherein the carboxylate substrate first undergoes adenylation by ATP, followed by a thioesterification in the presence of CoA to yield the final CoA thioester. The chain is Putative 4-coumarate--CoA ligase-like 8 (4CLL8) from Oryza sativa subsp. japonica (Rice).